A 469-amino-acid polypeptide reads, in one-letter code: SWI/SNF complex subunit SWI3B (469 aa).

Residues 1–42 (MAMKAPDPGGSGEILPSTPSLSETTSGGAAAASKSAQLPSSS) form a disordered region. Over residues 15–42 (LPSTPSLSETTSGGAAAASKSAQLPSSS) the composition is skewed to low complexity. The region spanning 48–145 (IHVPSYSSWF…YNSSASAKPL (98 aa)) is the SWIRM domain. One can recognise an SANT domain in the interval 223–274 (ESKPEWSDKEILLLLEAVMHYGDDWKKVASHVIGRTEKDCVSQFVKLPFGEQ). Composition is skewed to basic and acidic residues over residues 293-306 (DSDI…DKDG) and 360-369 (DKNASRDPNR). Disordered regions lie at residues 293–314 (DSDI…KRIK) and 360–387 (DKNA…ESER). Polar residues predominate over residues 370–380 (QDANAASSGET). Residues 423–447 (VHFEKLDLEMERSRKQLEEVRNLLF) adopt a coiled-coil conformation.

In terms of assembly, homodimers and heterodimers. Interacts with SWI3A, SWI3C, SWI3D, BSH, BRM and FCA (via C-terminus), and (via N-terminus) with HAB1. Interacts with MORC6 and SUVH9. Expressed in roots, stems, leaves, flowers and siliques.

The protein resides in the nucleus. Functionally, component of a multiprotein complex equivalent of the SWI/SNF complex, an ATP-dependent chromatin-remodeling complex, which is required for the positive and negative regulation of gene expression of a large number of genes. It changes chromatin structure by altering DNA-histone contacts within a nucleosome, leading eventually to a change in nucleosome position, thus facilitating or repressing binding of gene-specific transcription factors. May play an essential role in the transition from the vegetative to the reproductive phase of development. May be a positive regulator of ABA signaling. The protein is SWI/SNF complex subunit SWI3B (SWI3B) of Arabidopsis thaliana (Mouse-ear cress).